The following is a 282-amino-acid chain: Parvulin-like PPIase (282 aa).

The first 20 residues, 1–20 (MKKLSVIFLSVSMLSSIAFC), serve as a signal peptide directing secretion. Residues 138-231 (KEQIKVAHIL…FGWHIIKVLE (94 aa)) enclose the PpiC domain.

Belongs to the PpiC/parvulin rotamase family.

The protein localises to the cell outer membrane. The enzyme catalyses [protein]-peptidylproline (omega=180) = [protein]-peptidylproline (omega=0). In Rickettsia typhi (strain ATCC VR-144 / Wilmington), this protein is Parvulin-like PPIase (plp).